A 238-amino-acid polypeptide reads, in one-letter code: Large ribosomal subunit protein uL1 (238 aa).

The protein belongs to the universal ribosomal protein uL1 family. In terms of assembly, part of the 50S ribosomal subunit.

Its function is as follows. Binds directly to 23S rRNA. The L1 stalk is quite mobile in the ribosome, and is involved in E site tRNA release. In terms of biological role, protein L1 is also a translational repressor protein, it controls the translation of the L11 operon by binding to its mRNA. The sequence is that of Large ribosomal subunit protein uL1 from Salinispora tropica (strain ATCC BAA-916 / DSM 44818 / JCM 13857 / NBRC 105044 / CNB-440).